Consider the following 418-residue polypeptide: Isocitrate dehydrogenase [NADP] (418 aa).

Thr-106 contributes to the NADP(+) binding site. Positions 115, 117, 121, 131, and 155 each coordinate D-threo-isocitrate. Residue Ser-115 is modified to Phosphoserine. At Thr-193 the chain carries Phosphothreonine. Asp-309 lines the Mg(2+) pocket. Residues 341–347 (HGTAPKY), Asn-354, Tyr-393, and Arg-397 each bind NADP(+).

Belongs to the isocitrate and isopropylmalate dehydrogenases family. As to quaternary structure, homodimer. Mg(2+) is required as a cofactor. The cofactor is Mn(2+).

The protein resides in the secreted. It carries out the reaction D-threo-isocitrate + NADP(+) = 2-oxoglutarate + CO2 + NADPH. Catalyzes the oxidative decarboxylation of isocitrate to 2-oxoglutarate and carbon dioxide with the concomitant reduction of NADP(+). The polypeptide is Isocitrate dehydrogenase [NADP] (icd) (Pseudomonas aeruginosa (strain UCBPP-PA14)).